We begin with the raw amino-acid sequence, 88 residues long: Small ribosomal subunit protein bS20 (88 aa).

The disordered stretch occupies residues 1 to 27 (MANIPSAKKRARQAEKRRKHNQSQRSM). Residues 7–22 (AKKRARQAEKRRKHNQ) show a composition bias toward basic residues.

This sequence belongs to the bacterial ribosomal protein bS20 family.

Its function is as follows. Binds directly to 16S ribosomal RNA. The sequence is that of Small ribosomal subunit protein bS20 from Alkalilimnicola ehrlichii (strain ATCC BAA-1101 / DSM 17681 / MLHE-1).